A 430-amino-acid polypeptide reads, in one-letter code: Tyrosine--tRNA ligase (430 aa).

Y32 contacts L-tyrosine. The short motif at 37-46 (PTADSLHIGH) is the 'HIGH' region element. L-tyrosine-binding residues include Y172 and Q176. The short motif at 232-236 (KFGKT) is the 'KMSKS' region element. Position 235 (K235) interacts with ATP. One can recognise an S4 RNA-binding domain in the interval 362-429 (VKAVDLFVDN…GKKNYFLLIA (68 aa)).

The protein belongs to the class-I aminoacyl-tRNA synthetase family. TyrS type 1 subfamily. Homodimer.

It localises to the cytoplasm. It carries out the reaction tRNA(Tyr) + L-tyrosine + ATP = L-tyrosyl-tRNA(Tyr) + AMP + diphosphate + H(+). In terms of biological role, catalyzes the attachment of tyrosine to tRNA(Tyr) in a two-step reaction: tyrosine is first activated by ATP to form Tyr-AMP and then transferred to the acceptor end of tRNA(Tyr). This is Tyrosine--tRNA ligase from Bacteroides thetaiotaomicron (strain ATCC 29148 / DSM 2079 / JCM 5827 / CCUG 10774 / NCTC 10582 / VPI-5482 / E50).